Consider the following 204-residue polypeptide: MTEKLKQGIDQLGLKVPETIQQSMFAFLAFLQKWNQAYNLTAITEIKSMITHHLLDSLSILPYLKGDKILDVGSGAGFPGIPLAFACPEKKFTLIDSKAKKTAFLLQAASRFKITNVTIIQERVGSYQPGFYFDTITCRALGSVREIMEQTNHLLRPGGQWLIMKGTYPEKELRGTDASAIVHVLNVPGLKAERHLVEVKNNKG.

S-adenosyl-L-methionine contacts are provided by Gly73, Phe78, and Arg139.

It belongs to the methyltransferase superfamily. RNA methyltransferase RsmG family.

The protein localises to the cytoplasm. The enzyme catalyses guanosine(527) in 16S rRNA + S-adenosyl-L-methionine = N(7)-methylguanosine(527) in 16S rRNA + S-adenosyl-L-homocysteine. Functionally, specifically methylates the N7 position of guanine in position 527 of 16S rRNA. The sequence is that of Ribosomal RNA small subunit methyltransferase G from Coxiella burnetii (strain Dugway 5J108-111).